The sequence spans 256 residues: Leucyl/phenylalanyl-tRNA--protein transferase (256 aa).

Belongs to the L/F-transferase family.

It localises to the cytoplasm. It carries out the reaction N-terminal L-lysyl-[protein] + L-leucyl-tRNA(Leu) = N-terminal L-leucyl-L-lysyl-[protein] + tRNA(Leu) + H(+). The catalysed reaction is N-terminal L-arginyl-[protein] + L-leucyl-tRNA(Leu) = N-terminal L-leucyl-L-arginyl-[protein] + tRNA(Leu) + H(+). The enzyme catalyses L-phenylalanyl-tRNA(Phe) + an N-terminal L-alpha-aminoacyl-[protein] = an N-terminal L-phenylalanyl-L-alpha-aminoacyl-[protein] + tRNA(Phe). Functionally, functions in the N-end rule pathway of protein degradation where it conjugates Leu, Phe and, less efficiently, Met from aminoacyl-tRNAs to the N-termini of proteins containing an N-terminal arginine or lysine. This Hydrogenovibrio crunogenus (strain DSM 25203 / XCL-2) (Thiomicrospira crunogena) protein is Leucyl/phenylalanyl-tRNA--protein transferase.